Here is a 380-residue protein sequence, read N- to C-terminus: Chaperone protein DnaJ (380 aa).

Residues 6–71 enclose the J domain; the sequence is DYYESLEVSR…QKRAAYDRYG (66 aa). The CR-type zinc-finger motif lies at 136–215; the sequence is GVTKDVEVRT…CHGTGTEAKT (80 aa). The Zn(2+) site is built by C149, C152, C167, C170, C189, C192, C203, and C206. 4 CXXCXGXG motif repeats span residues 149 to 156, 167 to 174, 189 to 196, and 203 to 210; these read CEACHGSG, CPTCHGAG, CPTCHGSG, and CKVCHGTG.

The protein belongs to the DnaJ family. In terms of assembly, homodimer. Zn(2+) serves as cofactor.

It is found in the cytoplasm. In terms of biological role, participates actively in the response to hyperosmotic and heat shock by preventing the aggregation of stress-denatured proteins and by disaggregating proteins, also in an autonomous, DnaK-independent fashion. Unfolded proteins bind initially to DnaJ; upon interaction with the DnaJ-bound protein, DnaK hydrolyzes its bound ATP, resulting in the formation of a stable complex. GrpE releases ADP from DnaK; ATP binding to DnaK triggers the release of the substrate protein, thus completing the reaction cycle. Several rounds of ATP-dependent interactions between DnaJ, DnaK and GrpE are required for fully efficient folding. Also involved, together with DnaK and GrpE, in the DNA replication of plasmids through activation of initiation proteins. The protein is Chaperone protein DnaJ of Gluconobacter oxydans (strain 621H) (Gluconobacter suboxydans).